A 178-amino-acid chain; its full sequence is Conodipine-P1 (178 aa).

The N-terminal stretch at 1–24 (MKLLAPVLWAMAALGVTWLVAVDS) is a signal peptide. Residues Pro38, Pro42, and Pro49 each carry the 4-hydroxyproline; partial modification. The active site involves His54. Residues 98–130 (KREVTSHRATSIAHSRLWKTALDQKSFLNRKAR) constitute a propeptide, interchain peptide. Position 131 is a pyrrolidone carboxylic acid (Gln131). The residue at position 137 (Pro137) is a 4-hydroxyproline; partial.

The protein belongs to the phospholipase A2 family. Group IX subfamily. In terms of assembly, heterodimer of an alpha and a beta chain; probably disulfide-linked. Ca(2+) serves as cofactor. As to expression, expressed by the venom duct.

It is found in the secreted. It catalyses the reaction a 1,2-diacyl-sn-glycero-3-phosphocholine + H2O = a 1-acyl-sn-glycero-3-phosphocholine + a fatty acid + H(+). In terms of biological role, catalyzes the calcium-dependent hydrolysis of the 2-acyl groups in 3-sn-phosphoglycerides. The sequence is that of Conodipine-P1 from Conus purpurascens (Purple cone).